The following is a 516-amino-acid chain: Lysophosphatidylcholine acyltransferase 2B (516 aa).

Asn28 is a glycosylation site (N-linked (GlcNAc...) asparagine). Helical transmembrane passes span 44 to 64 (THLS…LVPV), 68 to 88 (CIVF…INLP), and 102 to 122 (LIKS…GFLV). The HXXXXD motif motif lies at 142 to 147 (HSTFFD). EF-hand domains lie at 387–422 (PISE…LCNP) and 424–459 (NTEK…AFGV). Positions 400, 402, 404, 406, 411, 437, 439, 441, 443, and 448 each coordinate Ca(2+).

This sequence belongs to the 1-acyl-sn-glycerol-3-phosphate acyltransferase family.

It is found in the membrane. It functions in the pathway lipid metabolism; phospholipid metabolism. Its function is as follows. Probable acetyltransferase. The protein is Lysophosphatidylcholine acyltransferase 2B (Lpcat2b) of Mus musculus (Mouse).